The sequence spans 490 residues: Betaine aldehyde dehydrogenase (490 aa).

Residues Ile-27 and Asp-93 each contribute to the K(+) site. 150 to 152 (GAW) is a binding site for NAD(+). Lys-162 (charge relay system) is an active-site residue. 176 to 179 (KPSE) contacts NAD(+). Residue Val-180 participates in K(+) binding. 230-233 (GTDT) is a binding site for NAD(+). Residue Leu-246 participates in K(+) binding. Residue Glu-252 is the Proton acceptor of the active site. 3 residues coordinate NAD(+): Gly-254, Cys-286, and Glu-387. Catalysis depends on Cys-286, which acts as the Nucleophile. Cysteine sulfenic acid (-SOH) is present on Cys-286. K(+)-binding residues include Lys-457 and Gly-460. Glu-464 functions as the Charge relay system in the catalytic mechanism.

This sequence belongs to the aldehyde dehydrogenase family. In terms of assembly, dimer of dimers. It depends on K(+) as a cofactor.

The catalysed reaction is betaine aldehyde + NAD(+) + H2O = glycine betaine + NADH + 2 H(+). It participates in amine and polyamine biosynthesis; betaine biosynthesis via choline pathway; betaine from betaine aldehyde: step 1/1. In terms of biological role, involved in the biosynthesis of the osmoprotectant glycine betaine. Catalyzes the irreversible oxidation of betaine aldehyde to the corresponding acid. This chain is Betaine aldehyde dehydrogenase, found in Pseudomonas fluorescens (strain SBW25).